A 164-amino-acid polypeptide reads, in one-letter code: Ubiquitin-fold modifier-conjugating enzyme 1 (164 aa).

The Glycyl thioester intermediate role is filled by C116.

It belongs to the ubiquitin-conjugating enzyme family. UFC1 subfamily.

E2-like enzyme which forms an intermediate with UFM1 via a thioester linkage. The sequence is that of Ubiquitin-fold modifier-conjugating enzyme 1 from Drosophila persimilis (Fruit fly).